The primary structure comprises 241 residues: MAPK phosphothreonine lyase (241 aa).

Residue His106 is the Proton donor of the active site. Residue Lys136 is the Proton acceptor of the active site.

Belongs to the phosphothreonine lyase family.

Its subcellular location is the secreted. Functionally, secreted effector that irreversibly inactivates host MAP kinases by catalyzing the dephosphorylation of the phosphothreonine residue in the pT-X-pY motif present in MAPKs, via a beta-elimination reaction leading to a dehydrobutyrine residue. The chain is MAPK phosphothreonine lyase (spvC) from Salmonella choleraesuis (strain SC-B67).